The chain runs to 359 residues: Phospho-N-acetylmuramoyl-pentapeptide-transferase (359 aa).

10 consecutive transmembrane segments (helical) span residues 3–23 (QILIAVAIAVAVSILLTPVLI), 55–75 (VAIVAGIWASYFGTHLVGVVI), 84–104 (GLLVLGLATALGAVGFLDDLI), 117–137 (TAKTVGILVAAVLFGVLALQF), 156–176 (IATVTLAPAVFVLFCVVVVSA), 190–210 (LAAGAMAMVCAAYVLITFWQF), 231–251 (LAIIAAATAGACIGFLWWNAA), 255–275 (IFMGDTGSLALGGIIAGLSVT), 283–303 (VVLGALFVAEVTSVVVQILAF), and 330–350 (VIIRFWLLTAIACGLGVALFY).

This sequence belongs to the glycosyltransferase 4 family. MraY subfamily. Requires Mg(2+) as cofactor.

Its subcellular location is the cell membrane. It catalyses the reaction UDP-N-acetyl-alpha-D-muramoyl-L-alanyl-gamma-D-glutamyl-meso-2,6-diaminopimeloyl-D-alanyl-D-alanine + di-trans,octa-cis-undecaprenyl phosphate = di-trans,octa-cis-undecaprenyl diphospho-N-acetyl-alpha-D-muramoyl-L-alanyl-D-glutamyl-meso-2,6-diaminopimeloyl-D-alanyl-D-alanine + UMP. It functions in the pathway cell wall biogenesis; peptidoglycan biosynthesis. In terms of biological role, catalyzes the initial step of the lipid cycle reactions in the biosynthesis of the cell wall peptidoglycan: transfers peptidoglycan precursor phospho-MurNAc-pentapeptide from UDP-MurNAc-pentapeptide onto the lipid carrier undecaprenyl phosphate, yielding undecaprenyl-pyrophosphoryl-MurNAc-pentapeptide, known as lipid I. This chain is Phospho-N-acetylmuramoyl-pentapeptide-transferase, found in Mycolicibacterium vanbaalenii (strain DSM 7251 / JCM 13017 / BCRC 16820 / KCTC 9966 / NRRL B-24157 / PYR-1) (Mycobacterium vanbaalenii).